A 500-amino-acid polypeptide reads, in one-letter code: NAD(P)H-quinone oxidoreductase chain 4, chloroplastic (500 aa).

Helical transmembrane passes span 4–24 (FPWL…MLFL), 35–55 (YTIC…CYNF), 87–107 (IGTI…AFPV), 113–130 (FFHF…GSFS), 134–154 (LLLF…LLSM), 167–187 (FILY…GISL), 211–231 (ILFY…IPLH), 242–262 (HYST…YGLV), 272–292 (AHSM…IYAA), 305–325 (IAYS…SITD), 330–350 (GAIL…FLAG), 386–406 (LALP…GIIT), 416–436 (ILII…LLSM), and 462–482 (LFLS…PDFV).

This sequence belongs to the complex I subunit 4 family.

Its subcellular location is the plastid. It is found in the chloroplast thylakoid membrane. The enzyme catalyses a plastoquinone + NADH + (n+1) H(+)(in) = a plastoquinol + NAD(+) + n H(+)(out). It carries out the reaction a plastoquinone + NADPH + (n+1) H(+)(in) = a plastoquinol + NADP(+) + n H(+)(out). The sequence is that of NAD(P)H-quinone oxidoreductase chain 4, chloroplastic from Arabis hirsuta (Hairy rock-cress).